The sequence spans 305 residues: Glycine--tRNA ligase alpha subunit (305 aa).

Belongs to the class-II aminoacyl-tRNA synthetase family. As to quaternary structure, tetramer of two alpha and two beta subunits.

It is found in the cytoplasm. It catalyses the reaction tRNA(Gly) + glycine + ATP = glycyl-tRNA(Gly) + AMP + diphosphate. The chain is Glycine--tRNA ligase alpha subunit from Streptococcus uberis (strain ATCC BAA-854 / 0140J).